The chain runs to 188 residues: MKLAIFGGTFDPIHAGHLAAAREASTRFALDRVLFIPAAHPPHKAGVTHAPYDDRVRMAELACRDDARFEVSRLEEGTARSYSIDTIEKVRAMLAPGDGLYFLIGADAFAEIRTWRRWTDVARAVRFLVVSRPGHTYEIPAEVTVDRIDSLEIPISSSEIRRTLAAGGIPEGLPPAVLAYARDHHLYN.

This sequence belongs to the NadD family.

The enzyme catalyses nicotinate beta-D-ribonucleotide + ATP + H(+) = deamido-NAD(+) + diphosphate. It participates in cofactor biosynthesis; NAD(+) biosynthesis; deamido-NAD(+) from nicotinate D-ribonucleotide: step 1/1. In terms of biological role, catalyzes the reversible adenylation of nicotinate mononucleotide (NaMN) to nicotinic acid adenine dinucleotide (NaAD). This is Probable nicotinate-nucleotide adenylyltransferase from Solibacter usitatus (strain Ellin6076).